We begin with the raw amino-acid sequence, 400 residues long: MALVTQARTLGKYFLLLDNMLVVLGFFVVFPLISIRFVEQLGWAGVIVGFALGLRQLVQQGLGIFGGAIADRFGAKPMIITGMLLRALGFALMALADKPWILWLSCILSALGGTLFDPPRTALVIKLTRPYERGRFYSLLLMQDSAGAVIGALIGSWLLLYDFHLVCWVGAGIFVLAAIFNAWLLPAYRISTTRTPIKEGLKRVILDKRFVQYVLTLTGYFVLSVQVMLMFPIVVNEIAGTPSAVKWMYAIEALLSLTLLYPIARWSEKHFRLEQRLMAGLFLMSISMFPVGITHSLHAIFLIITLFYLGTITAEPARETLSASLADPRARGSYMGFSRLGLAFGGAIGYTGGGWMYDIGKQLELPELPWFLLGSIGFITLYALHRQFNRKKIETAMLTP.

The next 10 helical transmembrane spans lie at 13–33 (YFLL…FPLI), 34–54 (SIRF…ALGL), 99–116 (PWIL…GTLF), 139–159 (LLLM…SWLL), 165–185 (LVCW…AWLL), 214–234 (VLTL…FPIV), 244–264 (AVKW…YPIA), 289–309 (FPVG…LFYL), 340–360 (LGLA…YDIG), and 365–385 (LPEL…YALH).

The protein belongs to the major facilitator superfamily. DHA1 family. MdtH (TC 2.A.1.2.21) subfamily.

The protein localises to the cell inner membrane. The protein is Multidrug resistance protein MdtH of Proteus mirabilis (strain HI4320).